The sequence spans 116 residues: Ferredoxin-like protein in nif region (116 aa).

A 4Fe-4S ferredoxin-type domain is found at 2–29 (AYTITSQCISCKLCSSVCPTGAIKVAED). Iron-sulfur cluster is bound by residues cysteine 9, cysteine 12, cysteine 15, and cysteine 19.

This is Ferredoxin-like protein in nif region (fdxN) from Trichormus azollae (Anabaena azollae).